Reading from the N-terminus, the 28-residue chain is Potassium channel toxin alpha-KTx 9.7 (28 aa).

Intrachain disulfides connect Cys-3/Cys-19, Cys-6/Cys-24, and Cys-10/Cys-26.

In terms of tissue distribution, expressed by the venom gland.

It localises to the secreted. Calcium channel activator. Rapidly and reversibly activates ryanodine receptor 1 (RYR1). This Hottentotta judaicus (Black scorpion) protein is Potassium channel toxin alpha-KTx 9.7.